The chain runs to 347 residues: Dihydroorotase (347 aa).

Zn(2+) is bound by residues His-14 and His-16. Residues 16–18 (HLR) and Asn-42 contribute to the substrate site. Zn(2+) contacts are provided by Lys-100, His-137, and His-175. Position 100 is an N6-carboxylysine (Lys-100). His-137 provides a ligand contact to substrate. Residue Leu-220 participates in substrate binding. Asp-248 is a binding site for Zn(2+). Residue Asp-248 is part of the active site. Residues His-252 and Ala-264 each coordinate substrate.

Belongs to the metallo-dependent hydrolases superfamily. DHOase family. Class II DHOase subfamily. As to quaternary structure, homodimer. The cofactor is Zn(2+).

The enzyme catalyses (S)-dihydroorotate + H2O = N-carbamoyl-L-aspartate + H(+). The protein operates within pyrimidine metabolism; UMP biosynthesis via de novo pathway; (S)-dihydroorotate from bicarbonate: step 3/3. Its function is as follows. Catalyzes the reversible cyclization of carbamoyl aspartate to dihydroorotate. The sequence is that of Dihydroorotase from Pseudomonas syringae pv. syringae (strain B728a).